A 257-amino-acid polypeptide reads, in one-letter code: MALAKRIIPCLDVTAGRVVKGVNFVELRDAGDPVEIARRYDDQGADELTFLDITATSDGRDLILPIIEAVASQVFIPLTVGGGVRAVEDVRRLLNAGADKVSMNSSAVANPQLVRDAADKYGSQCIVVAIDAKRVSAEGEPPRWEVFTHGGRKGTGLDAVEWARKMAEFGAGEILLTSMDRDGTKAGFDLALTRAVSDAVPVPVIASGGVGSLEHLAAGITEGHADAVLAASIFHYGEHTVGEAKRYMAERGIAVRL.

Active-site residues include aspartate 12 and aspartate 131.

This sequence belongs to the HisA/HisF family. In terms of assembly, heterodimer of HisH and HisF.

It is found in the cytoplasm. The enzyme catalyses 5-[(5-phospho-1-deoxy-D-ribulos-1-ylimino)methylamino]-1-(5-phospho-beta-D-ribosyl)imidazole-4-carboxamide + L-glutamine = D-erythro-1-(imidazol-4-yl)glycerol 3-phosphate + 5-amino-1-(5-phospho-beta-D-ribosyl)imidazole-4-carboxamide + L-glutamate + H(+). It functions in the pathway amino-acid biosynthesis; L-histidine biosynthesis; L-histidine from 5-phospho-alpha-D-ribose 1-diphosphate: step 5/9. In terms of biological role, IGPS catalyzes the conversion of PRFAR and glutamine to IGP, AICAR and glutamate. The HisF subunit catalyzes the cyclization activity that produces IGP and AICAR from PRFAR using the ammonia provided by the HisH subunit. The protein is Imidazole glycerol phosphate synthase subunit HisF of Burkholderia thailandensis (strain ATCC 700388 / DSM 13276 / CCUG 48851 / CIP 106301 / E264).